A 340-amino-acid chain; its full sequence is Fructose-1,6-bisphosphatase class 1 (340 aa).

Mg(2+) contacts are provided by glutamate 107, aspartate 126, leucine 128, and aspartate 129. Asparagine 215 is a substrate binding site. Glutamate 287 is a Mg(2+) binding site.

This sequence belongs to the FBPase class 1 family. Homotetramer. It depends on Mg(2+) as a cofactor.

The protein localises to the cytoplasm. It catalyses the reaction beta-D-fructose 1,6-bisphosphate + H2O = beta-D-fructose 6-phosphate + phosphate. It functions in the pathway carbohydrate biosynthesis; gluconeogenesis. In Brucella anthropi (strain ATCC 49188 / DSM 6882 / CCUG 24695 / JCM 21032 / LMG 3331 / NBRC 15819 / NCTC 12168 / Alc 37) (Ochrobactrum anthropi), this protein is Fructose-1,6-bisphosphatase class 1.